Consider the following 786-residue polypeptide: MSSILLRSYRHHAKVWTRPSSKSSFIRSLASRSNPTSSFEHVRRVFDDDKYYQDFNNGTLSRKIFSGPRTGLFKNEKLTTPQGLIDFSGQCLTEAQTLVDTMIREAETSDQGKIHYIRRLDQLSDILCRVIDVAEFIRVAHPNSKWTHAAQQTHELMFEYMNQLNTNVQLHTILGNILADKSITSKLSSEEIMVGEYLKQDFERSGIYMEPHTRENFVALTQEISVLGSHFNNGIHELKDYWCEISQQEYEAIDNADLKREIRRFQQKSPRSSRNSVYIPLAGSLPYSILQRCSMESVRRKVWIALHNASEEQISTLNLFLKYRATLSKMLGYESFAHYQLEHKMAKNPENVLTFLENLQRKMVDGENSGLISELESLYAMSNHWKPGASKSDIIHAIQPWDRDYLLHKLQEEKKETQLDDNISEYLSVGTIMSGLSQLFHSIYSIELLPEPSASGETWASQVRKIKVFDNETQSTLGFLYLDFWSPNVLPSHFTIVCSRQLNKDLGEKVEVMKPLVQLDETESHQLPVISLVCNFHQGNSFIGRFAGLETSKPTLLTLDQVDTIFHEMGHAMHSMIGRTKLQNLSGTRCSTDFVELPSVLMESFSKDPRVLGRIARHYSTNELLPHDILAKHQHYRNVLENSETYMQSKMAMLDQVLHGKSIVKQLEMARDDIDSTTMYHSLEKELKVFSDQWSTWHGKFPHLFSYGAVYFSYLFDRAIAEKIWKSLFQNDPWSREAGTTYKEAILKWGGTRDPWHCLADALSNQELSKGDEKAMRIIGGETKDL.

The transit peptide at 1–29 (MSSILLRSYRHHAKVWTRPSSKSSFIRSL) directs the protein to the mitochondrion. A Zn(2+)-binding site is contributed by His-567. Glu-568 is a catalytic residue. The Zn(2+) site is built by His-571 and His-574.

The protein belongs to the peptidase M3 family. The cofactor is Zn(2+).

Its subcellular location is the mitochondrion matrix. It catalyses the reaction Release of an N-terminal octapeptide as second stage of processing of some proteins imported into the mitochondrion.. Functionally, cleaves proteins, imported into the mitochondrion, to their mature size. While most mitochondrial precursor proteins are processed to the mature form in one step by mitochondrial processing peptidase (MPP), the sequential cleavage by MIP of an octapeptide after initial processing by MPP is a required step for a subgroup of nuclear-encoded precursor proteins destined for the matrix or the inner membrane. This chain is Mitochondrial intermediate peptidase (OCT1), found in Meyerozyma guilliermondii (strain ATCC 6260 / CBS 566 / DSM 6381 / JCM 1539 / NBRC 10279 / NRRL Y-324) (Yeast).